Consider the following 122-residue polypeptide: Large ribosomal subunit protein bL12 (122 aa).

It belongs to the bacterial ribosomal protein bL12 family. In terms of assembly, homodimer. Part of the ribosomal stalk of the 50S ribosomal subunit. Forms a multimeric L10(L12)X complex, where L10 forms an elongated spine to which 2 to 4 L12 dimers bind in a sequential fashion. Binds GTP-bound translation factors.

In terms of biological role, forms part of the ribosomal stalk which helps the ribosome interact with GTP-bound translation factors. Is thus essential for accurate translation. The sequence is that of Large ribosomal subunit protein bL12 from Streptococcus mutans serotype c (strain ATCC 700610 / UA159).